Here is a 259-residue protein sequence, read N- to C-terminus: O-antigen export system permease protein RfbA (259 aa).

6 helical membrane passes run 33 to 53, 73 to 95, 111 to 131, 142 to 162, 176 to 196, and 228 to 248; these read FGYL…YFIF, FPWQ…NAQI, VMME…FLFV, WGIP…SIIF, VSLG…SDMI, and EYIS…LAIF. One can recognise an ABC transmembrane type-2 domain in the interval 33–251; it reads FGYLWSIANP…IVGLAIFNKL (219 aa).

It belongs to the ABC-2 integral membrane protein family.

The protein localises to the cell inner membrane. Functionally, may form an ATP-driven O-antigen export apparatus, in association with RfbB. This is O-antigen export system permease protein RfbA (rfbA) from Klebsiella pneumoniae.